Here is a 342-residue protein sequence, read N- to C-terminus: MANVALLSAASPSTSSAAPRLRHVARRRPSRRSACPRSAASRLSIMAALGEDPIRQWILTEGKATKITGVSSIGGGCINSAQCYKTDAGSFFVKTNGRIGPSMFEGEALGLKAMYDTNSIRVPLPYKVGSLPTGGSFIIMEFIEFGCSRGDQSALGRKLAEMHKAAKSDKGYGFYVDNTIGSTPQINTWTADWIEFYSKHRLGFQLELITQRFGDSAIYDKGQRLIENMHPLFEGAVMEPCLLHGDLWSGNISSDTDGEPVILDPACYYGHNEAEFGMSWCAGFGGEFYSSYFEVMPKQPGFEKRRDLYLLYHYLNHYNLFGSGYRSSAMSIIDDYLRMLKA.

The transit peptide at 1–46 (MANVALLSAASPSTSSAAPRLRHVARRRPSRRSACPRSAASRLSIM) directs the protein to the chloroplast. Residue 141–143 (EFI) participates in ATP binding. Catalysis depends on Asp246, which acts as the Proton acceptor.

The protein belongs to the fructosamine kinase family.

Its subcellular location is the plastid. It is found in the chloroplast. The catalysed reaction is N(6)-D-ribulosyl-L-lysyl-[protein] + ATP = N(6)-(3-O-phospho-D-ribulosyl)-L-lysyl-[protein] + ADP + H(+). The enzyme catalyses N(6)-(D-erythrulosyl)-L-lysyl-[protein] + ATP = N(6)-(3-O-phospho-D-erythrulosyl)-L-lysyl-[protein] + ADP + H(+). In terms of biological role, initiates a process leading to the deglycation of proteins. Phosphorylates low-molecular-mass and protein-bound erythrulosamines and ribulosamines, but not fructosamines or psicosamines, on the third carbon of the sugar moiety. Protein-bound erythrulosamine 3-phosphates and ribulosamine 3-phosphates are unstable and decompose under physiological conditions. This is Protein-ribulosamine 3-kinase, chloroplastic from Oryza sativa subsp. indica (Rice).